The primary structure comprises 173 residues: NADH-ubiquinone oxidoreductase chain 6 (173 aa).

The next 6 helical transmembrane spans lie at 1–21, 27–47, 48–68, 87–107, 113–133, and 139–159; these read MTYF…AVAS, YGVV…LSLG, VSFV…VVFV, VVGY…VGGF, FGVI…FGGV, and CGVG…FVVL.

It belongs to the complex I subunit 6 family.

Its subcellular location is the mitochondrion membrane. It catalyses the reaction a ubiquinone + NADH + 5 H(+)(in) = a ubiquinol + NAD(+) + 4 H(+)(out). In terms of biological role, core subunit of the mitochondrial membrane respiratory chain NADH dehydrogenase (Complex I) that is believed to belong to the minimal assembly required for catalysis. Complex I functions in the transfer of electrons from NADH to the respiratory chain. The immediate electron acceptor for the enzyme is believed to be ubiquinone. This chain is NADH-ubiquinone oxidoreductase chain 6 (MT-ND6), found in Alle alle (Dovekie).